A 562-amino-acid chain; its full sequence is Potassium-transporting ATPase potassium-binding subunit (562 aa).

10 consecutive transmembrane segments (helical) span residues 5 to 25 (AFLL…PLGS), 63 to 83 (AAAI…LLMA), 132 to 152 (GLTV…FALI), 175 to 195 (LYVL…QGVL), 250 to 270 (LSNI…CFAF), 279 to 299 (QGHA…AVVM), 379 to 399 (GLYG…LMIG), 416 to 436 (MTAL…ALAL), 483 to 503 (VLLA…VLAI), and 526 to 546 (LFIG…FIPA).

The protein belongs to the KdpA family. In terms of assembly, the system is composed of three essential subunits: KdpA, KdpB and KdpC.

The protein localises to the cell inner membrane. In terms of biological role, part of the high-affinity ATP-driven potassium transport (or Kdp) system, which catalyzes the hydrolysis of ATP coupled with the electrogenic transport of potassium into the cytoplasm. This subunit binds the periplasmic potassium ions and delivers the ions to the membrane domain of KdpB through an intramembrane tunnel. This chain is Potassium-transporting ATPase potassium-binding subunit, found in Pectobacterium atrosepticum (strain SCRI 1043 / ATCC BAA-672) (Erwinia carotovora subsp. atroseptica).